A 222-amino-acid chain; its full sequence is Thiopurine S-methyltransferase (222 aa).

S-adenosyl-L-methionine contacts are provided by W10, L45, E66, and R123.

The protein belongs to the class I-like SAM-binding methyltransferase superfamily. TPMT family.

The protein localises to the cytoplasm. It carries out the reaction S-adenosyl-L-methionine + a thiopurine = S-adenosyl-L-homocysteine + a thiopurine S-methylether.. The polypeptide is Thiopurine S-methyltransferase (Pseudomonas fluorescens (strain ATCC BAA-477 / NRRL B-23932 / Pf-5)).